We begin with the raw amino-acid sequence, 572 residues long: Arginine--tRNA ligase (572 aa).

The 'HIGH' region motif lies at 122–132 (PNLAKEMHVGH).

Belongs to the class-I aminoacyl-tRNA synthetase family. Monomer.

It localises to the cytoplasm. The catalysed reaction is tRNA(Arg) + L-arginine + ATP = L-arginyl-tRNA(Arg) + AMP + diphosphate. This is Arginine--tRNA ligase from Neisseria meningitidis serogroup B (strain ATCC BAA-335 / MC58).